An 83-amino-acid polypeptide reads, in one-letter code: uncharacterized protein (83 aa).

A run of 2 helical transmembrane segments spans residues 11-31 (FYCIVTIPSAFVVLTVISFLL) and 48-68 (WHNLLFLIPFGLFFYPVHIWM).

Its subcellular location is the cell membrane. This is an uncharacterized protein from Bacillus subtilis (strain 168).